The sequence spans 381 residues: Alkanesulfonate monooxygenase (381 aa).

It belongs to the SsuD family. Homotetramer.

The catalysed reaction is an alkanesulfonate + FMNH2 + O2 = an aldehyde + FMN + sulfite + H2O + 2 H(+). Functionally, catalyzes the desulfonation of aliphatic sulfonates. The polypeptide is Alkanesulfonate monooxygenase (Escherichia coli O9:H4 (strain HS)).